The primary structure comprises 397 residues: MRRNPHFSLLKPQYLFSEISKKLAQFRKENPEISVIDLSIGDTTQPLCRSITQAIKEFCVSQEKQETYRGYGPETGLEKLRTKIASEVYENRISPEEIFISDGAKPDIFRLFSFFGSEKTLGLQDPVYPAYRDIAHITGIRDIIPLACRKETGFIPELPNQQSLDILCLCYPNNPTGTVLTFQQLQALVNYANQHGTVLIFDAAYSAFVSDPSLPKSIFEIPEAKYCAIEINSFSKSLGFTGMRLAWNVIPKELTYDNNEPMINDWKRLFATTFNGASLLMQEAGYYGLDLFPTPPAISLYLTNAQKLKKSLETAGFSVHGGDHAPYLWVELPEGISDEEAFDFFLHQYHIAVTPGHGFGSCGQGFVRFSALTQPQNIALACDRLCTASLKETMVLA.

2 residues coordinate substrate: tyrosine 14 and glycine 41. Pyridoxal 5'-phosphate-binding positions include tyrosine 71, 104–105, tyrosine 128, asparagine 174, tyrosine 205, and 233–235; these read AK and SFS. Residues lysine 105, tyrosine 128, and asparagine 174 each coordinate substrate. Lysine 236 carries the post-translational modification N6-(pyridoxal phosphate)lysine. Pyridoxal 5'-phosphate is bound by residues arginine 244 and asparagine 275. 2 residues coordinate substrate: asparagine 275 and arginine 368.

It belongs to the class-I pyridoxal-phosphate-dependent aminotransferase family. LL-diaminopimelate aminotransferase subfamily. As to quaternary structure, homodimer. Pyridoxal 5'-phosphate is required as a cofactor.

The enzyme catalyses (2S,6S)-2,6-diaminopimelate + 2-oxoglutarate = (S)-2,3,4,5-tetrahydrodipicolinate + L-glutamate + H2O + H(+). It participates in amino-acid biosynthesis; L-lysine biosynthesis via DAP pathway; LL-2,6-diaminopimelate from (S)-tetrahydrodipicolinate (aminotransferase route): step 1/1. In terms of biological role, involved in the synthesis of meso-diaminopimelate (m-DAP or DL-DAP), required for both lysine and peptidoglycan biosynthesis. Catalyzes the direct conversion of tetrahydrodipicolinate to LL-diaminopimelate. The polypeptide is LL-diaminopimelate aminotransferase (Chlamydia pneumoniae (Chlamydophila pneumoniae)).